We begin with the raw amino-acid sequence, 234 residues long: MSQVVNIKPHEKYYGVYIVELEDGSVKLATKNLVPGHRVYGERLYRWGGEEYREWNLYRSKLAGALANGLAEQPIREGHSILYLGVATGTTASHISDIVGPTGRIFSVEFAPRVMREFVLVADIRKNLYPILGDARKPKEYRHLVEMVDGIYADIAQPEQAAIVADNADYFLKDNGYLLLAIKARSIDVTKEPSEIYRREINTLKERGFEIIDVVHLEPYDKDHAMVYARYKRK.

S-adenosyl-L-methionine contacts are provided by residues 90-91, 109-110, 134-135, and 154-157; these read TT, EF, DA, and DIAQ.

Belongs to the methyltransferase superfamily. Fibrillarin family. As to quaternary structure, interacts with nop5. Component of box C/D small ribonucleoprotein (sRNP) particles that contain rpl7ae, FlpA and nop5, plus a guide RNA.

In terms of biological role, involved in pre-rRNA and tRNA processing. Utilizes the methyl donor S-adenosyl-L-methionine to catalyze the site-specific 2'-hydroxyl methylation of ribose moieties in rRNA and tRNA. Site specificity is provided by a guide RNA that base pairs with the substrate. Methylation occurs at a characteristic distance from the sequence involved in base pairing with the guide RNA. The chain is Fibrillarin-like rRNA/tRNA 2'-O-methyltransferase from Staphylothermus marinus (strain ATCC 43588 / DSM 3639 / JCM 9404 / F1).